The primary structure comprises 334 residues: Anthranilate phosphoribosyltransferase (334 aa).

5-phospho-alpha-D-ribose 1-diphosphate-binding positions include glycine 79, glycine 82 to aspartate 83, serine 87, asparagine 89 to threonine 92, lysine 107 to serine 115, and serine 119. Residue glycine 79 participates in anthranilate binding. Serine 91 serves as a coordination point for Mg(2+). Asparagine 110 contacts anthranilate. Arginine 165 contributes to the anthranilate binding site. Residues aspartate 224 and glutamate 225 each coordinate Mg(2+).

It belongs to the anthranilate phosphoribosyltransferase family. Homodimer. The cofactor is Mg(2+).

The enzyme catalyses N-(5-phospho-beta-D-ribosyl)anthranilate + diphosphate = 5-phospho-alpha-D-ribose 1-diphosphate + anthranilate. It functions in the pathway amino-acid biosynthesis; L-tryptophan biosynthesis; L-tryptophan from chorismate: step 2/5. Functionally, catalyzes the transfer of the phosphoribosyl group of 5-phosphorylribose-1-pyrophosphate (PRPP) to anthranilate to yield N-(5'-phosphoribosyl)-anthranilate (PRA). This is Anthranilate phosphoribosyltransferase from Streptococcus sanguinis (strain SK36).